A 504-amino-acid chain; its full sequence is Ammonium transporter 1 member 4 (504 aa).

12 helical membrane passes run 12–32, 55–75, 90–110, 136–156, 161–181, 207–227, 251–271, 292–314, 318–338, 344–364, 377–397, and 430–450; these read LIPL…AEYI, LLFS…LCAG, VIDA…FAFG, YFLY…GSIA, FVAY…IVSH, FAGS…GALI, LVVL…PGSF, AVGR…TLFG, IDGY…FAAI, VVEP…LMGC, LEAA…TGLF, and VVQI…LFFI. Threonine 471 is subject to Phosphothreonine.

This sequence belongs to the ammonia transporter channel (TC 1.A.11.2) family. Specifically expressed in pollen grains and tubes.

The protein localises to the cell membrane. High affinity ammonium transporter in the plasma membrane. This is Ammonium transporter 1 member 4 (AMT1-4) from Arabidopsis thaliana (Mouse-ear cress).